The primary structure comprises 116 residues: UPF0342 protein LBA1592 (116 aa).

Belongs to the UPF0342 family.

The chain is UPF0342 protein LBA1592 from Lactobacillus acidophilus (strain ATCC 700396 / NCK56 / N2 / NCFM).